The sequence spans 432 residues: D-amino acid dehydrogenase (432 aa).

An FAD-binding site is contributed by 3-17 (VVILGSGVVGVTSAW).

Belongs to the DadA oxidoreductase family. FAD serves as cofactor.

It localises to the cell inner membrane. It catalyses the reaction a D-alpha-amino acid + A + H2O = a 2-oxocarboxylate + AH2 + NH4(+). Its pathway is amino-acid degradation; D-alanine degradation; NH(3) and pyruvate from D-alanine: step 1/1. In terms of biological role, oxidative deamination of D-amino acids. In Salmonella typhi, this protein is D-amino acid dehydrogenase.